The chain runs to 309 residues: MGIEGRGSGAMQSKKTIKWLKQALVLSSIVNILLLLLIYSTVFRKDIYKLRVFPGNLIAKSSRIGKIPEDILERLENASFADLLALLQEERMVFGHPLKSWALGVSIQKYFVDIAPMLTHPLTFIRLKSPERTWLLPDINDQEFTRICQYLLTERFPFSSRGFFRIMVRDCEAGMVDEDVLYRFCHLPEFLYVRSLLFGAEIEAASVASLARMIIQGGEDLFFSLCCLENRQTAISDHQRRCFLKAYVDRQEPLAALLLLVHDADWVLHEFSDSDLQSFIQLLPREAHYTKKFLGCVAQSCRLGILLEG.

A helical membrane pass occupies residues 23 to 43 (ALVLSSIVNILLLLLIYSTVF).

It belongs to the chlamydial CPn_0593/CT_474/TC_0759 family.

Its subcellular location is the membrane. This is an uncharacterized protein from Chlamydia trachomatis serovar D (strain ATCC VR-885 / DSM 19411 / UW-3/Cx).